A 282-amino-acid chain; its full sequence is Release factor glutamine methyltransferase (282 aa).

The S-adenosyl-L-methionine site is built by aspartate 141, phenylalanine 169, and asparagine 186. 186-189 contacts substrate; that stretch reads NPPY.

The protein belongs to the protein N5-glutamine methyltransferase family. PrmC subfamily.

The enzyme catalyses L-glutaminyl-[peptide chain release factor] + S-adenosyl-L-methionine = N(5)-methyl-L-glutaminyl-[peptide chain release factor] + S-adenosyl-L-homocysteine + H(+). Methylates the class 1 translation termination release factors RF1/PrfA and RF2/PrfB on the glutamine residue of the universally conserved GGQ motif. In Mycoplasma mycoides subsp. mycoides SC (strain CCUG 32753 / NCTC 10114 / PG1), this protein is Release factor glutamine methyltransferase.